A 1678-amino-acid chain; its full sequence is MPPGVRQLTVLGKFKPFGLIAEATDGKSPDDSYQYFLFDPELTGERDDADGNDANFSRQREHELFIRDNCNVRKGYALVEANFIGYWYNACWSNLGRGTEAFLCVLQIACLTIYNTSGEVVSVPLMRTVKSIWPLPCGLLLEQAGEVNPPSHVPFSPVSPILGSREMLRQRKEVGNSSPQNFHSPVAHDLISKRDMPCMSSHLILRDPLEEPGPTYVEERGKLTIMKDYDERTIWTSDRLPLMTSYNKGKMQHSVWAAEFIESNLEASASCSSGIVPDAVLSKRVSFRRIWQAKGAKKAASKVFLATDNSVPVICFLILEQKKLLSVGLQTVEINNEILFDVKPDISWSVSAIAAAPVVVTRSQVKIGLLPHLDIIVLSPENDLFLYSGKQCLCRYVLPSWLGESIGSGDGESAKTDSGFRNLKITGLSDAVLGSINLSVNHSQIFRCALTGKPSSSLANDCIAAIAEGLRSDLYSLFLSLLWGDGHSDLQGSSIHFEWEALCNIFLEICQKPTVVHRKQPKTASESSWEFLLISKFHKTYSRFHNGITSINRLDLEGIVPFDSKICSEETLGSSCELMVQSLDCLHAVYESLKMDNLRKQDLHHLAVLLCNIAKFLDEKCYLDYYIRDFPRLSTTIGACTTLSSSRKPPNLFRWLENCLRRGCLSTNFDDLPDLIRRDGCSIVSWARKVVSFYSVLFGDKPEGRTLSSGVPCNIAPGSYSCNEELTILAMAGERFGLHQLDLLPSGVSLPLRHALDSCRESPPADWPAIAYVLLGREDMALSVFRNFSSSKEFEMQSNTSLISMSIPYMLHLHPVIVPSSESIGLENTKIEDTNSVDGSVIDGMEHIFNSYTQLRYGRDLRLNEVRRLLCSARPVVVQTAANPTISDQEQQQAFTVPKLVLAGRLPSQQNAIVNLDPNIRNIQELKTWPEFHNAVAAGLRLAPLQGKVSRTWIRYNKPGEPNAVHAGLLFGLGLQGYLHVLNLSDIYQYFTQDHESTTVGLMLGLAASYRGTMQPDIAKALFFHVPARYQASYTEFEIPTLLQSAALVSVGMLFEGSAHQQTMQLLLGEIGRRSAGDNVLEREGYAVSAGFSLGLVALGRGGDALGSMDSLVNRLLLYLGAKEERSILVPSLEDHRSAAQITDGSTSNVDITAPGAIIALTLMYLKTESEVIFSKLSIPQTHYDLECVRPDFIMLRVIARNLIMWSRICPTCDWIQSQVPEVVKNGISQLRDDMDNMYEVDVEALVQAYVNIVAGACISLGLRFAGTRDGNARDLLNSYALYLLNEIKPLSATPGNAFPRGISKFVDRGTLEMCLYLIIISLSVVMAGSGDLQVFRLLRFLRSRNSADGHANYGTQMAVSLATGFLFLGGGMRTFSTNNGSLAMLLITLYPRLPSGPNDNRCHLQAFRHLYVLATEARWLQTIDVDSGLPVYAPLEVTVKETKLYSETKFCEITPCILPERAILKRICVCGPRYWPQQIELVFGLRTLGESNLIANSHRELDSDSVDHLVSTFSSDPSLIAFAQLCCDKSWNNSFDFLILDLILWSQVALAYNEAVSTGRLASSGGFVQSIFLASLRKRCEEVLNCSTELKINLRNYLTSEAWPYDKNSKLQKDIIILSWYLKWFNVPSPSIIKAAVEKIKSKSKNSTSAIPLLRLLLPNTHISVIGEIDRVFFPSN.

PC repeat units lie at residues 1089–1116 (SAGF…VNRL), 1156–1194 (GAII…PDFI), 1256–1293 (GACI…PLSA), and 1320–1354 (IISL…HANY).

Belongs to the APC1 family. In terms of assembly, the APC/C is composed of at least 10 subunits.

Its subcellular location is the nucleus. The protein operates within protein modification; protein ubiquitination. Functionally, component of the anaphase promoting complex/cyclosome (APC/C), a cell cycle-regulated E3 ubiquitin-protein ligase complex that controls progression through mitosis and the G1 phase of the cell cycle. The APC/C complex controls several key steps in the cell cycle by mediating ubiquitination and subsequent degradation of target proteins such as cyclins. The APC/C complex is required for the female gametophyte development and is involved in several aspect of development by controlling cell division and cell elongation. Involved in the control of endoreduplication. The sequence is that of Anaphase-promoting complex subunit 1 (APC1) from Arabidopsis thaliana (Mouse-ear cress).